The following is a 205-amino-acid chain: Small ribosomal subunit protein uS4 (205 aa).

One can recognise an S4 RNA-binding domain in the interval 95–156 (SRLDNIVYRM…KTIKIPIVKA (62 aa)).

It belongs to the universal ribosomal protein uS4 family. As to quaternary structure, part of the 30S ribosomal subunit. Contacts protein S5. The interaction surface between S4 and S5 is involved in control of translational fidelity.

Functionally, one of the primary rRNA binding proteins, it binds directly to 16S rRNA where it nucleates assembly of the body of the 30S subunit. With S5 and S12 plays an important role in translational accuracy. The chain is Small ribosomal subunit protein uS4 from Mycoplasma pneumoniae (strain ATCC 29342 / M129 / Subtype 1) (Mycoplasmoides pneumoniae).